Here is a 94-residue protein sequence, read N- to C-terminus: Large ribosomal subunit protein bL27 (94 aa).

Residues 1–9 (MLELNLQLF) constitute a propeptide that is removed on maturation. Residues 12 to 33 (KKGGGSTSNGRDSQAKRLGAKA) are disordered.

Belongs to the bacterial ribosomal protein bL27 family. The N-terminus is cleaved by ribosomal processing cysteine protease Prp.

The chain is Large ribosomal subunit protein bL27 from Lactococcus lactis subsp. lactis (strain IL1403) (Streptococcus lactis).